A 362-amino-acid polypeptide reads, in one-letter code: Phosphoserine aminotransferase (362 aa).

Arg-43 is an L-glutamate binding site. Pyridoxal 5'-phosphate-binding positions include 77–78 (AR), Trp-103, Thr-153, Asp-173, and Gln-196. Lys-197 bears the N6-(pyridoxal phosphate)lysine mark.

It belongs to the class-V pyridoxal-phosphate-dependent aminotransferase family. SerC subfamily. Homodimer. The cofactor is pyridoxal 5'-phosphate.

It is found in the cytoplasm. It carries out the reaction O-phospho-L-serine + 2-oxoglutarate = 3-phosphooxypyruvate + L-glutamate. It catalyses the reaction 4-(phosphooxy)-L-threonine + 2-oxoglutarate = (R)-3-hydroxy-2-oxo-4-phosphooxybutanoate + L-glutamate. It functions in the pathway amino-acid biosynthesis; L-serine biosynthesis; L-serine from 3-phospho-D-glycerate: step 2/3. The protein operates within cofactor biosynthesis; pyridoxine 5'-phosphate biosynthesis; pyridoxine 5'-phosphate from D-erythrose 4-phosphate: step 3/5. In terms of biological role, catalyzes the reversible conversion of 3-phosphohydroxypyruvate to phosphoserine and of 3-hydroxy-2-oxo-4-phosphonooxybutanoate to phosphohydroxythreonine. The protein is Phosphoserine aminotransferase of Legionella pneumophila subsp. pneumophila (strain Philadelphia 1 / ATCC 33152 / DSM 7513).